Here is a 275-residue protein sequence, read N- to C-terminus: Tryptophan synthase alpha chain (275 aa).

Active-site proton acceptor residues include Glu-49 and Asp-60.

This sequence belongs to the TrpA family. In terms of assembly, tetramer of two alpha and two beta chains.

The catalysed reaction is (1S,2R)-1-C-(indol-3-yl)glycerol 3-phosphate + L-serine = D-glyceraldehyde 3-phosphate + L-tryptophan + H2O. The protein operates within amino-acid biosynthesis; L-tryptophan biosynthesis; L-tryptophan from chorismate: step 5/5. Its function is as follows. The alpha subunit is responsible for the aldol cleavage of indoleglycerol phosphate to indole and glyceraldehyde 3-phosphate. The polypeptide is Tryptophan synthase alpha chain (Nitrosomonas europaea (strain ATCC 19718 / CIP 103999 / KCTC 2705 / NBRC 14298)).